Here is a 131-residue protein sequence, read N- to C-terminus: Large ribosomal subunit protein bL12c (131 aa).

Belongs to the bacterial ribosomal protein bL12 family. As to quaternary structure, homodimer. Part of the ribosomal stalk of the 50S ribosomal subunit. Forms a multimeric L10(L12)X complex, where L10 forms an elongated spine to which 2 to 4 L12 dimers bind in a sequential fashion. Binds GTP-bound translation factors.

The protein resides in the plastid. It localises to the chloroplast. Forms part of the ribosomal stalk which helps the ribosome interact with GTP-bound translation factors. Is thus essential for accurate translation. The protein is Large ribosomal subunit protein bL12c of Euglena gracilis.